Consider the following 269-residue polypeptide: Eukaryotic translation initiation factor 3 subunit G-1 (269 aa).

In terms of domain architecture, RRM spans 188–266 (AAIRISNLSE…LILSVEWSKP (79 aa)).

The protein belongs to the eIF-3 subunit G family. As to quaternary structure, component of the eukaryotic translation initiation factor 3 (eIF-3) complex. The eIF-3 complex interacts with pix.

The protein localises to the cytoplasm. In terms of biological role, RNA-binding component of the eukaryotic translation initiation factor 3 (eIF-3) complex, which is involved in protein synthesis of a specialized repertoire of mRNAs and, together with other initiation factors, stimulates binding of mRNA and methionyl-tRNAi to the 40S ribosome. The eIF-3 complex specifically targets and initiates translation of a subset of mRNAs involved in cell proliferation. This subunit can bind 18S rRNA. The chain is Eukaryotic translation initiation factor 3 subunit G-1 from Drosophila mojavensis (Fruit fly).